Reading from the N-terminus, the 1942-residue chain is GREB1-like protein (1942 aa).

4 disordered regions span residues 76-101 (SSNSVEDMDDEDDSDTSSPPLPYLQG), 235-306 (PFSN…GTKT), 325-373 (MDGR…HRSW), and 1123-1256 (TKTA…RTQV). Residues 81–90 (EDMDDEDDSD) are compositionally biased toward acidic residues. The segment covering 237 to 253 (SNSASSSKPSSSSSLSS) has biased composition (low complexity). Positions 338 to 362 (NPLSTPSHGYRTTETGDSPASTAMS) are enriched in polar residues. Over residues 1127 to 1155 (TSREERPREGERSSGETAEHDDLPMELER) the composition is skewed to basic and acidic residues. Residues 1158–1171 (SNASAATRTSGSTT) are compositionally biased toward low complexity. Residues 1172 to 1202 (ENGVSSSSILDKPSSQSDPCGSRTMMDSCSS) are compositionally biased toward polar residues. Residues 1212–1248 (SQAPSSSSTSSFSSASSSSSSSSSPAAQRPSQSTQAP) are compositionally biased toward low complexity. The helical transmembrane segment at 1861–1881 (GVIFSGLLLYLCDSFVVSSLL) threads the bilayer.

Belongs to the GREB1 family.

The protein resides in the membrane. Its function is as follows. Plays a major role in early metanephros development. The sequence is that of GREB1-like protein (greb1l) from Danio rerio (Zebrafish).